Consider the following 299-residue polypeptide: tRNA dimethylallyltransferase (299 aa).

13–20 (GPTASGKT) contacts ATP. Position 15–20 (15–20 (TASGKT)) interacts with substrate. An interaction with substrate tRNA region spans residues 38–41 (DSRQ).

It belongs to the IPP transferase family. In terms of assembly, monomer. It depends on Mg(2+) as a cofactor.

The enzyme catalyses adenosine(37) in tRNA + dimethylallyl diphosphate = N(6)-dimethylallyladenosine(37) in tRNA + diphosphate. Its function is as follows. Catalyzes the transfer of a dimethylallyl group onto the adenine at position 37 in tRNAs that read codons beginning with uridine, leading to the formation of N6-(dimethylallyl)adenosine (i(6)A). The sequence is that of tRNA dimethylallyltransferase from Prochlorococcus marinus (strain NATL2A).